Reading from the N-terminus, the 99-residue chain is SAGA-associated factor 11 (99 aa).

The SGF11-type zinc-finger motif lies at 71 to 92; the sequence is FYCENCGREVSGNRFAAHLQRC.

The protein belongs to the SGF11 family. Component of the 1.8 MDa SAGA transcription coactivator-HAT complex. SAGA is built of 5 distinct domains with specialized functions. Within the SAGA complex, SUS1, SGF11, SGF73 and UBP8 form an additional subcomplex of SAGA called the DUB module (deubiquitination module). Interacts directly with SGF73, SUS1 and UBP8.

The protein localises to the nucleus. Functionally, functions as a component of the transcription regulatory histone acetylation (HAT) complex SAGA. At the promoters, SAGA is required for recruitment of the basal transcription machinery. It influences RNA polymerase II transcriptional activity through different activities such as TBP interaction and promoter selectivity, interaction with transcription activators, and chromatin modification through histone acetylation and deubiquitination. SAGA acetylates nucleosomal histone H3 to some extent (to form H3K9ac, H3K14ac, H3K18ac and H3K23ac). SAGA interacts with DNA via upstream activating sequences (UASs). Involved in transcriptional regulation of a subset of SAGA-regulated genes. Within the SAGA complex, participates in a subcomplex, that specifically deubiquitinates histones H2B. In Candida glabrata (strain ATCC 2001 / BCRC 20586 / JCM 3761 / NBRC 0622 / NRRL Y-65 / CBS 138) (Yeast), this protein is SAGA-associated factor 11.